The sequence spans 269 residues: Staphylococcal secretory antigen ssaA2 (269 aa).

A signal peptide spans methionine 1–alanine 27. Repeat copies occupy residues tyrosine 83 to asparagine 85, tyrosine 88 to asparagine 90, tyrosine 91 to asparagine 93, tyrosine 97 to asparagine 99, tyrosine 103 to asparagine 105, tyrosine 106 to asparagine 108, and tyrosine 115 to asparagine 117. The tract at residues tyrosine 83–tyrosine 115 is 7 X 3 AA repeats of Y-[NS]-N. Residues methionine 148 to histidine 269 enclose the Peptidase C51 domain.

It localises to the secreted. Functionally, not known; immunogenic protein. The sequence is that of Staphylococcal secretory antigen ssaA2 (ssaA2) from Staphylococcus aureus (strain MSSA476).